We begin with the raw amino-acid sequence, 426 residues long: MAPEPEDDIMNEKNPRPLDEDDIALLKTYGLGPYSTSIKKVEKEIKEMAKKINDLCGIKESDTGLAPPSQWDLVSDKQMMQEEQPLQVARCTKIISPNTDDAKYVINVKQIAKFVVGLGDKVSPTDIEEGMRVGVDRNKYQIQIPLPPKIDPSVTMMTVEEKPDVTYNDVGGCKEQIEKMREVVELPMLHPEKFVKLGIDPPKGVLCYGPPGTGKTLLARAVANRTDACFIRVIGSELVQKYVGEGARMVRELFQMARSKKACIVFFDEVDAIGGARFDDGVGGDNEVQRTMLEIVNQLDGFDARGNIKVLMATNRPDTLDPALLRPGRLDRKVEFGLPDLEGRTQIFKIHTRTMNCERDIRFELLARLCPNSTGADIRSVCTEAGMYAIRARRKTVTEKDFLDAVNKVIKGYQKFSATPKYMVYN.

209-216 (GPPGTGKT) is an ATP binding site.

Belongs to the AAA ATPase family.

It is found in the cytoplasm. It localises to the nucleus. Functionally, the 26S proteasome is involved in the ATP-dependent degradation of ubiquitinated proteins. The regulatory (or ATPase) complex confers ATP dependency and substrate specificity to the 26S complex. The chain is 26S proteasome regulatory subunit 7B (RPT1B) from Oryza sativa subsp. japonica (Rice).